The primary structure comprises 545 residues: ATP synthase subunit alpha (545 aa).

173-180 is an ATP binding site; sequence GDRQTGKS.

The protein belongs to the ATPase alpha/beta chains family. F-type ATPases have 2 components, CF(1) - the catalytic core - and CF(0) - the membrane proton channel. CF(1) has five subunits: alpha(3), beta(3), gamma(1), delta(1), epsilon(1). CF(0) has three main subunits: a(1), b(2) and c(9-12). The alpha and beta chains form an alternating ring which encloses part of the gamma chain. CF(1) is attached to CF(0) by a central stalk formed by the gamma and epsilon chains, while a peripheral stalk is formed by the delta and b chains.

The protein resides in the cell membrane. The enzyme catalyses ATP + H2O + 4 H(+)(in) = ADP + phosphate + 5 H(+)(out). Its function is as follows. Produces ATP from ADP in the presence of a proton gradient across the membrane. The alpha chain is a regulatory subunit. The sequence is that of ATP synthase subunit alpha from Pseudarthrobacter chlorophenolicus (strain ATCC 700700 / DSM 12829 / CIP 107037 / JCM 12360 / KCTC 9906 / NCIMB 13794 / A6) (Arthrobacter chlorophenolicus).